A 403-amino-acid polypeptide reads, in one-letter code: Phosphopentomutase (403 aa).

Mn(2+) contacts are provided by aspartate 13, aspartate 298, histidine 303, aspartate 339, histidine 340, and histidine 351.

This sequence belongs to the phosphopentomutase family. The cofactor is Mn(2+).

It is found in the cytoplasm. It catalyses the reaction 2-deoxy-alpha-D-ribose 1-phosphate = 2-deoxy-D-ribose 5-phosphate. The catalysed reaction is alpha-D-ribose 1-phosphate = D-ribose 5-phosphate. It functions in the pathway carbohydrate degradation; 2-deoxy-D-ribose 1-phosphate degradation; D-glyceraldehyde 3-phosphate and acetaldehyde from 2-deoxy-alpha-D-ribose 1-phosphate: step 1/2. Isomerase that catalyzes the conversion of deoxy-ribose 1-phosphate (dRib-1-P) and ribose 1-phosphate (Rib-1-P) to deoxy-ribose 5-phosphate (dRib-5-P) and ribose 5-phosphate (Rib-5-P), respectively. This Streptococcus pneumoniae (strain JJA) protein is Phosphopentomutase.